The following is a 337-amino-acid chain: SH3 and cysteine-rich domain-containing protein 3 (337 aa).

Over residues Met-1 to Pro-11 the composition is skewed to basic and acidic residues. Disordered stretches follow at residues Met-1–Lys-61 and Asn-162–Ala-215. Acidic residues predominate over residues Glu-35–Pro-48. The Phorbol-ester/DAG-type zinc finger occupies Pro-59–Cys-110. Composition is skewed to basic and acidic residues over residues Lys-167–Met-176 and Leu-184–Asn-212. 2 SH3 domains span residues Met-220 to Ala-279 and Ala-280 to Ile-337.

In terms of assembly, component of a calcium channel complex with CACNA1S.

It localises to the cytoplasm. It is found in the cell membrane. The protein resides in the sarcolemma. Its subcellular location is the T-tubule. Required for normal excitation-contraction coupling in skeletal muscle and for normal muscle contraction in response to membrane depolarization. Required for normal Ca(2+) release from the sarcplasmic reticulum, which ultimately leads to muscle contraction. Probably functions via its effects on muscle calcium channels. Increases CACNA1S channel activity, in addition to its role in enhancing the expression of CACNA1S at the cell membrane. Has a redundant role in promoting the expression of the calcium channel CACNA1S at the cell membrane. This Xenopus tropicalis (Western clawed frog) protein is SH3 and cysteine-rich domain-containing protein 3 (stac3).